A 314-amino-acid polypeptide reads, in one-letter code: Flotillin-like protein FloA (314 aa).

A helical membrane pass occupies residues Ile4–Val24.

The protein belongs to the flotillin-like FloA family. In terms of assembly, homooligomerizes.

The protein localises to the cell membrane. It localises to the membrane raft. Its function is as follows. Found in functional membrane microdomains (FMM) that may be equivalent to eukaryotic membrane rafts. FMMs are highly dynamic and increase in number as cells age. Flotillins are thought to be important factors in membrane fluidity. In Listeria innocua serovar 6a (strain ATCC BAA-680 / CLIP 11262), this protein is Flotillin-like protein FloA.